The sequence spans 933 residues: 2-oxoglutarate dehydrogenase E1 component (933 aa).

The protein belongs to the alpha-ketoglutarate dehydrogenase family. Homodimer. Part of the 2-oxoglutarate dehydrogenase (OGDH) complex composed of E1 (2-oxoglutarate dehydrogenase), E2 (dihydrolipoamide succinyltransferase) and E3 (dihydrolipoamide dehydrogenase); the complex contains multiple copies of the three enzymatic components (E1, E2 and E3). Thiamine diphosphate is required as a cofactor.

The catalysed reaction is N(6)-[(R)-lipoyl]-L-lysyl-[protein] + 2-oxoglutarate + H(+) = N(6)-[(R)-S(8)-succinyldihydrolipoyl]-L-lysyl-[protein] + CO2. E1 component of the 2-oxoglutarate dehydrogenase (OGDH) complex which catalyzes the decarboxylation of 2-oxoglutarate, the first step in the conversion of 2-oxoglutarate to succinyl-CoA and CO(2). In Rickettsia typhi (strain ATCC VR-144 / Wilmington), this protein is 2-oxoglutarate dehydrogenase E1 component (sucA).